A 552-amino-acid polypeptide reads, in one-letter code: Probable protein kinase UbiB (552 aa).

A helical membrane pass occupies residues 22 to 42 (LLPANLPLAATLLLLPFKLFP). One can recognise a Protein kinase domain in the interval 118 to 498 (SFNIEPLASA…QQLARQRNRR (381 aa)). ATP is bound by residues 124–132 (LASASVAQV) and Lys146. Residue Asp281 is the Proton acceptor of the active site. Transmembrane regions (helical) follow at residues 501-521 (ITLLAFAGAIALAWPSLGEGI) and 530-550 (FGDIPTASYLLAAIGLSAWLL).

It belongs to the ABC1 family. UbiB subfamily.

It localises to the cell inner membrane. It participates in cofactor biosynthesis; ubiquinone biosynthesis [regulation]. In terms of biological role, is probably a protein kinase regulator of UbiI activity which is involved in aerobic coenzyme Q (ubiquinone) biosynthesis. The sequence is that of Probable protein kinase UbiB from Cellvibrio japonicus (strain Ueda107) (Pseudomonas fluorescens subsp. cellulosa).